The sequence spans 397 residues: Ribosomal RNA large subunit methyltransferase I (397 aa).

One can recognise a PUA domain in the interval 2-80; it reads SAAIYLVKGR…QDINRAFFVK (79 aa).

The protein belongs to the methyltransferase superfamily. RlmI family.

It localises to the cytoplasm. The catalysed reaction is cytidine(1962) in 23S rRNA + S-adenosyl-L-methionine = 5-methylcytidine(1962) in 23S rRNA + S-adenosyl-L-homocysteine + H(+). Specifically methylates the cytosine at position 1962 (m5C1962) of 23S rRNA. The chain is Ribosomal RNA large subunit methyltransferase I from Vibrio vulnificus (strain CMCP6).